A 906-amino-acid polypeptide reads, in one-letter code: Protein translocase subunit SecA (906 aa).

ATP-binding positions include Gln-89, 107 to 111 (GEGKT), and Asp-502. Residues Cys-890, Cys-892, Cys-901, and His-902 each contribute to the Zn(2+) site.

The protein belongs to the SecA family. In terms of assembly, monomer and homodimer. Part of the essential Sec protein translocation apparatus which comprises SecA, SecYEG and auxiliary proteins SecDF-YajC and YidC. Zn(2+) is required as a cofactor.

The protein resides in the cell inner membrane. Its subcellular location is the cytoplasm. The catalysed reaction is ATP + H2O + cellular proteinSide 1 = ADP + phosphate + cellular proteinSide 2.. Part of the Sec protein translocase complex. Interacts with the SecYEG preprotein conducting channel. Has a central role in coupling the hydrolysis of ATP to the transfer of proteins into and across the cell membrane, serving both as a receptor for the preprotein-SecB complex and as an ATP-driven molecular motor driving the stepwise translocation of polypeptide chains across the membrane. This is Protein translocase subunit SecA from Bartonella quintana (strain Toulouse) (Rochalimaea quintana).